Reading from the N-terminus, the 154-residue chain is 17.4 kDa class I heat shock protein (154 aa).

The sHSP domain maps to 40–154 (DAAAFAGARI…PDVKSIQITG (115 aa)).

Belongs to the small heat shock protein (HSP20) family. In terms of assembly, may form oligomeric structures.

The protein resides in the cytoplasm. This chain is 17.4 kDa class I heat shock protein (HSP17.4), found in Oryza sativa subsp. japonica (Rice).